A 314-amino-acid polypeptide reads, in one-letter code: HTH-type transcriptional regulator LeuO (314 aa).

The region spanning Val-22 to Thr-79 is the HTH lysR-type domain. A DNA-binding region (H-T-H motif) is located at residues Ile-39 to Ala-58.

It belongs to the LysR transcriptional regulatory family.

Its function is as follows. A global transcription factor. Activates transcription of the 9 following operons; yjjQ-bglJ, yjjP, acrEF, ybdO, yjcRQP, casABCDE12, rhsD-ybbC, fepE and gltF, in most cases it probably interferes with silencing by H-NS and activates transcription. Represses transcription of the 3 following operons; uxaCA, sdaCB and btsT. H-NS repression of the bgl operon, leading to the ability to metabolize some beta-glucosides. It also directly activates the bgl operon. Activation is H-NS and BglJ-RcsB independent. The polypeptide is HTH-type transcriptional regulator LeuO (leuO) (Escherichia coli (strain K12)).